A 58-amino-acid chain; its full sequence is Protein translocase subunit SecE (58 aa).

A helical transmembrane segment spans residues 36–56 (ILLIGFIGFLMFAIMSLLPGV).

The protein belongs to the SecE/SEC61-gamma family. Component of the Sec protein translocase complex. Heterotrimer consisting of SecY (alpha), SecG (beta) and SecE (gamma) subunits. The heterotrimers can form oligomers, although 1 heterotrimer is thought to be able to translocate proteins. Interacts with the ribosome. May interact with SecDF, and other proteins may be involved.

The protein localises to the cell membrane. Functionally, essential subunit of the Sec protein translocation channel SecYEG. Clamps together the 2 halves of SecY. May contact the channel plug during translocation. This Halorubrum lacusprofundi (strain ATCC 49239 / DSM 5036 / JCM 8891 / ACAM 34) protein is Protein translocase subunit SecE.